Reading from the N-terminus, the 788-residue chain is MESVDTELTSFNNMVAKSSYPVRILHHNNGISEDEEGGSGVEPYVGLEFDTAEEAREFYNAYAARTGFKVRTGQLYRSRTDGTVSSRRFVCSKEGFQLNSRTGCTAFIRVQRRDTGKWVLDQIQKEHNHELGGEGSVEETTPRPSRAPAPTKLGVTVNPHRPKMKVVDESDRETRSCPGGFKRFKGGGGEGEVSDDHHQTQQAKAVTGTEPYAGLEFGSANEACQFYQAYAEVVGFRVRIGQLFRSKVDGSITSRRFVCSREGFQHPSRMGCGAYMRIKRQDSGGWIVDRLNKDHNHDLEPGKKNDAGMKKIPDDGTGGLDSVDLIELNDFGNNHIKKTRENRIGKEWYPLLLDYFQSRQTEDMGFFYAVELDVNNGSCMSIFWADSRARFACSQFGDSVVFDTSYRKGSYSVPFATIIGFNHHRQPVLLGCAMVADESKEAFLWLFQTWLRAMSGRRPRSIVADQDLPIQQALVQVFPGAHHRYSAWQIREKERENLIPFPSEFKYEYEKCIYQTQTIVEFDSVWSALINKYGLRDDVWLREIYEQRENWVPAYLRASFFAGIPINGTIEPFFGASLDALTPLREFISRYEQALEQRREEERKEDFNSYNLQPFLQTKEPVEEQCRRLYTLTVFRIFQNELVQSYNYLCLKTYEEGAISRFLVRKCGNESEKHAVTFSASNLNSSCSCQMFEHEGLLCRHILKVFNLLDIRELPSRYILHRWTKNAEFGFVRDMESGVSAQDLKALMVWSLREAASKYIEFGTSSLEKYKLAYEIMREGGKKLCWQR.

The region spanning 57 to 133 (EFYNAYAART…QKEHNHELGG (77 aa)) is the FAR1 1 domain. A disordered region spans residues 127–200 (HNHELGGEGS…GEVSDDHHQT (74 aa)). Residues 142-151 (PRPSRAPAPT) show a composition bias toward low complexity. The segment covering 165-175 (KVVDESDRETR) has biased composition (basic and acidic residues). An FAR1 2 domain is found at 225 to 301 (QFYQAYAEVV…NKDHNHDLEP (77 aa)). Residues 399 to 495 (SVVFDTSYRK…SAWQIREKER (97 aa)) enclose the MULE domain. The SWIM-type zinc-finger motif lies at 674–710 (HAVTFSASNLNSSCSCQMFEHEGLLCRHILKVFNLLD).

This sequence belongs to the FHY3/FAR1 family. Expressed in hypocotyls, rosette and cauline leaves, inflorescences stems, flowers and siliques.

It localises to the nucleus. Putative transcription activator involved in regulating light control of development. This chain is Protein FAR1-RELATED SEQUENCE 12 (FRS12), found in Arabidopsis thaliana (Mouse-ear cress).